A 380-amino-acid chain; its full sequence is Histidinol-phosphate aminotransferase (380 aa).

Residue Lys232 is modified to N6-(pyridoxal phosphate)lysine.

Belongs to the class-II pyridoxal-phosphate-dependent aminotransferase family. Histidinol-phosphate aminotransferase subfamily. Homodimer. The cofactor is pyridoxal 5'-phosphate.

It carries out the reaction L-histidinol phosphate + 2-oxoglutarate = 3-(imidazol-4-yl)-2-oxopropyl phosphate + L-glutamate. It participates in amino-acid biosynthesis; L-histidine biosynthesis; L-histidine from 5-phospho-alpha-D-ribose 1-diphosphate: step 7/9. This chain is Histidinol-phosphate aminotransferase, found in Mycobacterium bovis (strain BCG / Pasteur 1173P2).